Here is a 263-residue protein sequence, read N- to C-terminus: 2-keto-4-pentenoate hydratase 1 (263 aa).

The protein belongs to the hydratase/decarboxylase family. MhpD subfamily. A divalent metal cation is required as a cofactor.

The catalysed reaction is (S)-4-hydroxy-2-oxopentanoate = (2Z)-2-hydroxypenta-2,4-dienoate + H2O. Its pathway is aromatic compound metabolism; 3-phenylpropanoate degradation. Functionally, catalyzes the conversion of 2-hydroxypentadienoic acid (enolic form of 2-oxopent-4-enoate) to 4-hydroxy-2-ketopentanoic acid. This Dechloromonas aromatica (strain RCB) protein is 2-keto-4-pentenoate hydratase 1.